The primary structure comprises 223 residues: UPF0758 protein HD_0732 (223 aa).

The MPN domain occupies 98–220 (TINTPHLAIM…YFSFEEERFH (123 aa)). Positions 169, 171, and 182 each coordinate Zn(2+). Positions 169–182 (HNHPSGNCTASQAD) match the JAMM motif motif.

Belongs to the UPF0758 family.

The chain is UPF0758 protein HD_0732 from Haemophilus ducreyi (strain 35000HP / ATCC 700724).